Here is a 298-residue protein sequence, read N- to C-terminus: Apolipoprotein E (298 aa).

An N-terminal signal peptide occupies residues 1-18 (MKVLWAALVVTLLAGCQA). A run of 6 repeats spans residues 74–95 (LLME…QELA), 96–117 (PMAE…SRLR), 118–139 (ADME…TMMG), 140–161 (QSGE…KRLL), 162–183 (RDVE…EGAE), and 223–244 (GRLE…EQME). Positions 74-244 (LLMEDTMKEV…RLEEVREQME (171 aa)) are 8 X 22 AA approximate tandem repeats. Met-137 carries the methionine sulfoxide modification. A Phosphoserine modification is found at Ser-141. The interval 152–162 (HLRKLRKRLLR) is LDL and other lipoprotein receptors binding. Position 156–159 (156–159 (LRKR)) interacts with heparin. Positions 204–272 (SLPSQPLRER…SWFEPMMEDM (69 aa)) are lipid-binding and lipoprotein association. 218-225 (GEQMRGRL) contacts heparin. The interval 260–272 (RFKSWFEPMMEDM) is specificity for association with VLDL.

Belongs to the apolipoprotein A1/A4/E family. Homotetramer. May interact with ABCA1; functionally associated with ABCA1 in the biogenesis of HDLs. May interact with APP/A4 amyloid-beta peptide; the interaction is extremely stable in vitro but its physiological significance is unclear. May interact with MAPT. May interact with MAP2. In the cerebrospinal fluid, interacts with secreted SORL1. Interacts with PMEL; this allows the loading of PMEL luminal fragment on ILVs to induce fibril nucleation. APOE exists as multiple glycosylated and sialylated glycoforms within cells and in plasma. The extent of glycosylation and sialylation are tissue and context specific. Post-translationally, glycated in plasma VLDL. In terms of processing, phosphorylated by FAM20C in the extracellular medium.

The protein resides in the secreted. The protein localises to the extracellular space. Its subcellular location is the extracellular matrix. It is found in the extracellular vesicle. It localises to the endosome. The protein resides in the multivesicular body. Functionally, APOE is an apolipoprotein, a protein associating with lipid particles, that mainly functions in lipoprotein-mediated lipid transport between organs via the plasma and interstitial fluids. APOE is a core component of plasma lipoproteins and is involved in their production, conversion and clearance. Apolipoproteins are amphipathic molecules that interact both with lipids of the lipoprotein particle core and the aqueous environment of the plasma. As such, APOE associates with chylomicrons, chylomicron remnants, very low density lipoproteins (VLDL) and intermediate density lipoproteins (IDL) but shows a preferential binding to high-density lipoproteins (HDL). It also binds a wide range of cellular receptors including the LDL receptor/LDLR, the LDL receptor-related proteins LRP1, LRP2 and LRP8 and the very low-density lipoprotein receptor/VLDLR that mediate the cellular uptake of the APOE-containing lipoprotein particles. Finally, APOE also has a heparin-binding activity and binds heparan-sulfate proteoglycans on the surface of cells, a property that supports the capture and the receptor-mediated uptake of APOE-containing lipoproteins by cells. A main function of APOE is to mediate lipoprotein clearance through the uptake of chylomicrons, VLDLs, and HDLs by hepatocytes. APOE is also involved in the biosynthesis by the liver of VLDLs as well as their uptake by peripheral tissues ensuring the delivery of triglycerides and energy storage in muscle, heart and adipose tissues. By participating in the lipoprotein-mediated distribution of lipids among tissues, APOE plays a critical role in plasma and tissues lipid homeostasis. APOE is also involved in two steps of reverse cholesterol transport, the HDLs-mediated transport of cholesterol from peripheral tissues to the liver, and thereby plays an important role in cholesterol homeostasis. First, it is functionally associated with ABCA1 in the biogenesis of HDLs in tissues. Second, it is enriched in circulating HDLs and mediates their uptake by hepatocytes. APOE also plays an important role in lipid transport in the central nervous system, regulating neuron survival and sprouting. The polypeptide is Apolipoprotein E (APOE) (Dasyprocta punctata (Central American agouti)).